Consider the following 145-residue polypeptide: MSDAQTHGTVLAFDLGLKRTGVASGELAIGIAHPLTVIQAESTDARMAAIEKLAAEWQPALFVLGLPTRADGSENEMTRVARNFARRLESRFERPVFLIDERLTSATAESELHARGIHGKKNKALTDAVAAQLILQGFFDARLTA.

The protein belongs to the YqgF nuclease family.

The protein resides in the cytoplasm. In terms of biological role, could be a nuclease involved in processing of the 5'-end of pre-16S rRNA. The sequence is that of Putative pre-16S rRNA nuclease from Thiobacillus denitrificans (strain ATCC 25259 / T1).